We begin with the raw amino-acid sequence, 798 residues long: uncharacterized protein (798 aa).

Residues 432–573 (KLTDNLSNKS…KNKAYRGRRV (142 aa)) are disordered. Composition is skewed to low complexity over residues 438 to 449 (SNKSSNDNTSET), 456 to 465 (RSSNSRNSDN), 473 to 487 (SKTQSSDSSKSSRIP), and 495 to 510 (STNSVVSVGSTGSDVY). Residues 519 to 529 (PSRSTYKSRTI) are compositionally biased toward polar residues. Positions 535 to 547 (ESSPVSSRTSSPV) are enriched in low complexity. Residues 548-562 (DDSRLKQSRISEDKP) are compositionally biased toward basic and acidic residues. Basic residues predominate over residues 563–572 (RKNKAYRGRR).

The protein localises to the virion. This is an uncharacterized protein from Acanthamoeba polyphaga (Amoeba).